We begin with the raw amino-acid sequence, 294 residues long: Protease HtpX homolog 2 (294 aa).

2 helical membrane-spanning segments follow: residues 15 to 35 and 36 to 56; these read MLFTMFLLAAVYLFFLAFLSY and YGTSQIFIILFIGLFMAAQYF. His-140 is a binding site for Zn(2+). Glu-141 is an active-site residue. A Zn(2+)-binding site is contributed by His-144. Transmembrane regions (helical) follow at residues 151 to 171 and 185 to 205; these read AVLTIASFLSSVAFYIVRYSL and GGIMLVWLVSIVVWIVSFLLI. Glu-213 is a Zn(2+) binding site.

Belongs to the peptidase M48B family. Zn(2+) serves as cofactor.

The protein localises to the cell membrane. This is Protease HtpX homolog 2 from Methanosarcina mazei (strain ATCC BAA-159 / DSM 3647 / Goe1 / Go1 / JCM 11833 / OCM 88) (Methanosarcina frisia).